Here is a 489-residue protein sequence, read N- to C-terminus: 3-octaprenyl-4-hydroxybenzoate carboxy-lyase (489 aa).

Asn-172 is a binding site for Mn(2+). Prenylated FMN contacts are provided by residues 175-177, 189-191, and 194-195; these read VYR, RWL, and RG. Glu-240 provides a ligand contact to Mn(2+). Asp-288 functions as the Proton donor in the catalytic mechanism.

This sequence belongs to the UbiD family. Homohexamer. It depends on prenylated FMN as a cofactor. Requires Mn(2+) as cofactor.

The protein resides in the cell membrane. The enzyme catalyses a 4-hydroxy-3-(all-trans-polyprenyl)benzoate + H(+) = a 2-(all-trans-polyprenyl)phenol + CO2. The protein operates within cofactor biosynthesis; ubiquinone biosynthesis. Its function is as follows. Catalyzes the decarboxylation of 3-octaprenyl-4-hydroxy benzoate to 2-octaprenylphenol, an intermediate step in ubiquinone biosynthesis. This Wigglesworthia glossinidia brevipalpis protein is 3-octaprenyl-4-hydroxybenzoate carboxy-lyase.